An 861-amino-acid polypeptide reads, in one-letter code: 1,4-alpha-glucan-branching enzyme (861 aa).

Residues tryptophan 173 and lysine 208 each contribute to the (1,4-alpha-D-glucosyl)n site. Residue aspartate 429 is the Nucleophile of the active site. Glutamate 484 (proton donor) is an active-site residue.

The protein belongs to the glycosyl hydrolase 13 family. GlgB subfamily. In terms of assembly, monomer.

It is found in the plastid. It localises to the chloroplast. The protein resides in the amyloplast. The enzyme catalyses Transfers a segment of a (1-&gt;4)-alpha-D-glucan chain to a primary hydroxy group in a similar glucan chain.. Its pathway is glycan biosynthesis; starch biosynthesis. Catalyzes the formation of the alpha-1,6-glucosidic linkages in starch by scission of a 1,4-alpha-linked oligosaccharide from growing alpha-1,4-glucan chains and the subsequent attachment of the oligosaccharide to the alpha-1,6 position. This Solanum tuberosum (Potato) protein is 1,4-alpha-glucan-branching enzyme (SBE1).